A 1486-amino-acid polypeptide reads, in one-letter code: Chromosome partition protein MukB (1486 aa).

34–41 is a binding site for ATP; it reads GGNGAGKS. Coiled coils occupy residues 326 to 418, 444 to 480, and 509 to 603; these read LEAD…QYNQ, LETFQAKELEATEKMLSLEQKMSMAQTAHSQFEQAYQ, and RHLA…RAPV. The segment at 666 to 783 is flexible hinge; it reads PGGSEDQRLN…EVPLFGRAAR (118 aa). Coiled-coil stretches lie at residues 835–923, 977–1115, and 1209–1266; these read EAEI…AKLE, EMLS…TAKA, and VEAI…QNVS.

This sequence belongs to the SMC family. MukB subfamily. As to quaternary structure, homodimerization via its hinge domain. Binds to DNA via its C-terminal region. Interacts, and probably forms a ternary complex, with MukE and MukF via its C-terminal region. The complex formation is stimulated by calcium or magnesium. Interacts with tubulin-related protein FtsZ.

The protein localises to the cytoplasm. Its subcellular location is the nucleoid. Plays a central role in chromosome condensation, segregation and cell cycle progression. Functions as a homodimer, which is essential for chromosome partition. Involved in negative DNA supercoiling in vivo, and by this means organize and compact chromosomes. May achieve or facilitate chromosome segregation by condensation DNA from both sides of a centrally located replisome during cell division. This Shigella boydii serotype 4 (strain Sb227) protein is Chromosome partition protein MukB.